The chain runs to 305 residues: Tyrosine recombinase XerC (305 aa).

The 92-residue stretch at 4-95 (TSIQALINKW…AVKNFYRFLE (92 aa)) folds into the Core-binding (CB) domain. A Tyr recombinase domain is found at 116 to 298 (LLPKALSEDD…SIKHLEAVYT (183 aa)). Residues Arg159, Lys182, His250, Arg253, and His276 contribute to the active site. The O-(3'-phospho-DNA)-tyrosine intermediate role is filled by Tyr285.

It belongs to the 'phage' integrase family. XerC subfamily. Forms a cyclic heterotetrameric complex composed of two molecules of XerC and two molecules of XerD.

Its subcellular location is the cytoplasm. Its function is as follows. Site-specific tyrosine recombinase, which acts by catalyzing the cutting and rejoining of the recombining DNA molecules. The XerC-XerD complex is essential to convert dimers of the bacterial chromosome into monomers to permit their segregation at cell division. It also contributes to the segregational stability of plasmids. The sequence is that of Tyrosine recombinase XerC from Rickettsia rickettsii (strain Iowa).